The primary structure comprises 330 residues: tRNA-modifying protein YgfZ (330 aa).

Positions 28 and 190 each coordinate folate.

This sequence belongs to the tRNA-modifying YgfZ family.

It is found in the cytoplasm. Folate-binding protein involved in regulating the level of ATP-DnaA and in the modification of some tRNAs. It is probably a key factor in regulatory networks that act via tRNA modification, such as initiation of chromosomal replication. This chain is tRNA-modifying protein YgfZ, found in Yersinia enterocolitica serotype O:8 / biotype 1B (strain NCTC 13174 / 8081).